Reading from the N-terminus, the 21-residue chain is Fibrinogen beta chain (21 aa).

Position 1 is a pyrrolidone carboxylic acid (Q1). Acidic residues predominate over residues 1 to 11 (QHSTDYDEVED). The disordered stretch occupies residues 1 to 21 (QHSTDYDEVEDDRAKLHLDAR). T4 carries an O-linked (GalNAc...) threonine glycan. Position 6 is a sulfotyrosine (Y6). Residues 12-21 (DRAKLHLDAR) are compositionally biased toward basic and acidic residues.

In terms of assembly, heterohexamer; disulfide linked. Contains 2 sets of 3 non-identical chains (alpha, beta and gamma). The 2 heterotrimers are in head to head conformation with the N-termini in a small central domain. Post-translationally, conversion of fibrinogen to fibrin is triggered by thrombin, which cleaves fibrinopeptides A and B from alpha and beta chains, and thus exposes the N-terminal polymerization sites responsible for the formation of the soft clot.

It is found in the secreted. Its function is as follows. Cleaved by the protease thrombin to yield monomers which, together with fibrinogen alpha (FGA) and fibrinogen gamma (FGG), polymerize to form an insoluble fibrin matrix. Fibrin has a major function in hemostasis as one of the primary components of blood clots. In addition, functions during the early stages of wound repair to stabilize the lesion and guide cell migration during re-epithelialization. Was originally thought to be essential for platelet aggregation, based on in vitro studies using anticoagulated blood. However subsequent studies have shown that it is not absolutely required for thrombus formation in vivo. Enhances expression of SELP in activated platelets. Maternal fibrinogen is essential for successful pregnancy. Fibrin deposition is also associated with infection, where it protects against IFNG-mediated hemorrhage. May also facilitate the antibacterial immune response via both innate and T-cell mediated pathways. The polypeptide is Fibrinogen beta chain (FGB) (Muntiacus muntjak (Barking deer)).